A 184-amino-acid chain; its full sequence is Putative rRNA methyltransferase YlbH (184 aa).

The disordered stretch occupies residues 1 to 22 (MRVISGSKKGRSLKAVAGTSTR).

The protein belongs to the methyltransferase superfamily. RsmD family.

Functionally, may catalyze the S-adenosyl-L-methionine-dependent methylation of a specific base in rRNA. The sequence is that of Putative rRNA methyltransferase YlbH (ylbH) from Bacillus subtilis (strain 168).